The sequence spans 151 residues: Large ribosomal subunit protein uL15 (151 aa).

Residues 1–60 (MAENNPLKIHNLRPAPGAKTAKTRVGRGEASKGKTAGRGTKGTKARYQVPERFEGGQMPL) form a disordered region.

This sequence belongs to the universal ribosomal protein uL15 family. As to quaternary structure, part of the 50S ribosomal subunit.

Its function is as follows. Binds to the 23S rRNA. This chain is Large ribosomal subunit protein uL15, found in Streptomyces avermitilis (strain ATCC 31267 / DSM 46492 / JCM 5070 / NBRC 14893 / NCIMB 12804 / NRRL 8165 / MA-4680).